A 279-amino-acid chain; its full sequence is DNA repair protein RecO (279 aa).

The protein belongs to the RecO family.

Involved in DNA repair and RecF pathway recombination. This is DNA repair protein RecO from Thermosynechococcus vestitus (strain NIES-2133 / IAM M-273 / BP-1).